Reading from the N-terminus, the 434-residue chain is MFS-type transporter pynF (434 aa).

Residues 1–13 (MSHDQRSPSEEVS) show a composition bias toward basic and acidic residues. The segment at 1–34 (MSHDQRSPSEEVSRTALSKPASESTIVGDGHHPL) is disordered. The next 12 helical transmembrane spans lie at 44 to 64 (WLVV…LNAF), 84 to 104 (IAWI…VVGP), 109 to 129 (VGAT…LMLT), 138 to 158 (LILA…YPTI), 171 to 191 (IALG…TEII), 203 to 223 (TVRA…VLII), 249 to 269 (LLFS…FFYL), 280 to 302 (VTGA…VLTG), 311 to 331 (FNVI…LHKI), 334 to 354 (SGAI…LISL), 375 to 395 (LMMG…GALL), and 402 to 422 (WYGF…VTIL).

Belongs to the major facilitator superfamily. Monocarboxylate porter (TC 2.A.1.13) family.

It localises to the cell membrane. Functionally, MFS-type transporter; part of the gene cluster that mediates the biosynthesis of pyranonigrins, a family of antioxidative compounds. May be involved in the secretion of pyranonigrins. This Aspergillus niger (strain ATCC MYA-4892 / CBS 513.88 / FGSC A1513) protein is MFS-type transporter pynF.